The chain runs to 380 residues: Cytochrome b (380 aa).

4 helical membrane passes run 34 to 54 (FGSL…LLAM), 78 to 99 (WLIR…YLHI), 114 to 134 (WNTG…GYVL), and 179 to 199 (FFAL…IHLT). Heme b-binding residues include His84 and His98. The heme b site is built by His183 and His197. His202 is an a ubiquinone binding site. Helical transmembrane passes span 227 to 247 (LKDA…ALFS), 289 to 309 (LGGV…PLLH), 321 to 341 (LSQL…WVGS), and 348 to 368 (FIII…ILFP).

Belongs to the cytochrome b family. The cytochrome bc1 complex contains 11 subunits: 3 respiratory subunits (MT-CYB, CYC1 and UQCRFS1), 2 core proteins (UQCRC1 and UQCRC2) and 6 low-molecular weight proteins (UQCRH/QCR6, UQCRB/QCR7, UQCRQ/QCR8, UQCR10/QCR9, UQCR11/QCR10 and a cleavage product of UQCRFS1). This cytochrome bc1 complex then forms a dimer. It depends on heme b as a cofactor.

It is found in the mitochondrion inner membrane. In terms of biological role, component of the ubiquinol-cytochrome c reductase complex (complex III or cytochrome b-c1 complex) that is part of the mitochondrial respiratory chain. The b-c1 complex mediates electron transfer from ubiquinol to cytochrome c. Contributes to the generation of a proton gradient across the mitochondrial membrane that is then used for ATP synthesis. The chain is Cytochrome b (MT-CYB) from Oceanites oceanicus (Wilson's storm petrel).